Here is a 309-residue protein sequence, read N- to C-terminus: Probable manganese-dependent inorganic pyrophosphatase (309 aa).

The Mn(2+) site is built by His9, Asp13, Asp15, Asp75, His97, and Asp149.

It belongs to the PPase class C family. Requires Mn(2+) as cofactor.

Its subcellular location is the cytoplasm. It carries out the reaction diphosphate + H2O = 2 phosphate + H(+). This Bacillus cereus (strain 03BB102) protein is Probable manganese-dependent inorganic pyrophosphatase.